The chain runs to 488 residues: Ribulose bisphosphate carboxylase large chain 1 (488 aa).

Substrate is bound by residues N128 and T178. K180 serves as the catalytic Proton acceptor. K182 lines the substrate pocket. Mg(2+) is bound by residues K206, D208, and E209. K206 is modified (N6-carboxylysine). H298 functions as the Proton acceptor in the catalytic mechanism. Positions 299, 331, and 383 each coordinate substrate.

It belongs to the RuBisCO large chain family. Type I subfamily. As to quaternary structure, heterohexadecamer of 8 large chains and 8 small chains. The cofactor is Mg(2+).

The catalysed reaction is 2 (2R)-3-phosphoglycerate + 2 H(+) = D-ribulose 1,5-bisphosphate + CO2 + H2O. The enzyme catalyses D-ribulose 1,5-bisphosphate + O2 = 2-phosphoglycolate + (2R)-3-phosphoglycerate + 2 H(+). Its function is as follows. RuBisCO catalyzes two reactions: the carboxylation of D-ribulose 1,5-bisphosphate, the primary event in carbon dioxide fixation, as well as the oxidative fragmentation of the pentose substrate. Both reactions occur simultaneously and in competition at the same active site. The chain is Ribulose bisphosphate carboxylase large chain 1 from Methylibium petroleiphilum (strain ATCC BAA-1232 / LMG 22953 / PM1).